The following is a 583-amino-acid chain: 15-cis-phytoene desaturase, chloroplastic/chromoplastic (583 aa).

The N-terminal 111 residues, 1–111 (MPQIGLVSAV…FRASPRPTKP (111 aa)), are a transit peptide targeting the chloroplast and chromoplast. FAD is bound by residues 118-134 (GAGL…ADAG), 141-142 (EA), Lys-149, 166-167 (HI), and Tyr-172. A substrate-binding site is contributed by Arg-307. Residues Ile-349 and Asp-538 each coordinate FAD. Ala-546 is a binding site for substrate. Met-548 contributes to the FAD binding site.

It belongs to the carotenoid/retinoid oxidoreductase family. As to quaternary structure, homotetramer. Requires FAD as cofactor.

The protein localises to the plastid. The protein resides in the chloroplast. It is found in the chromoplast. It localises to the membrane. The catalysed reaction is 2 a plastoquinone + 15-cis-phytoene = 9,9',15-tri-cis-zeta-carotene + 2 a plastoquinol. It functions in the pathway carotenoid biosynthesis; lycopene biosynthesis. Its function is as follows. Converts phytoene into zeta-carotene via the intermediary of phytofluene by the symmetrical introduction of two double bonds at the C-11 and C-11' positions of phytoene with a concomitant isomerization of two neighboring double bonds at the C9 and C9' positions from trans to cis. The protein is 15-cis-phytoene desaturase, chloroplastic/chromoplastic (PDS) of Solanum lycopersicum (Tomato).